We begin with the raw amino-acid sequence, 353 residues long: Photosystem II D2 protein (353 aa).

Position 2 is an N-acetylthreonine (Thr2). Phosphothreonine is present on Thr2. The helical transmembrane segment at 41 to 61 (CAYFALGGWFTGTTFVTSWYT) threads the bilayer. His118 is a binding site for chlorophyll a. Residues 125–141 (GFMLRQFELARSVQLRP) traverse the membrane as a helical segment. Residues Gln130 and Asn143 each contribute to the pheophytin a site. Residues 153-166 (VFVSVFLIYPLGQS) traverse the membrane as a helical segment. His198 serves as a coordination point for chlorophyll a. Residues 208-228 (AALLCAIHGATVENTLFEDGD) form a helical membrane-spanning segment. Residues His215 and Phe262 each coordinate a plastoquinone. Residue His215 coordinates Fe cation. His269 contacts Fe cation. The chain crosses the membrane as a helical span at residues 279–295 (GLWMSALGVVGLALNLR).

Belongs to the reaction center PufL/M/PsbA/D family. In terms of assembly, PSII is composed of 1 copy each of membrane proteins PsbA, PsbB, PsbC, PsbD, PsbE, PsbF, PsbH, PsbI, PsbJ, PsbK, PsbL, PsbM, PsbT, PsbX, PsbY, PsbZ, Psb30/Ycf12, at least 3 peripheral proteins of the oxygen-evolving complex and a large number of cofactors. It forms dimeric complexes. The D1/D2 heterodimer binds P680, chlorophylls that are the primary electron donor of PSII, and subsequent electron acceptors. It shares a non-heme iron and each subunit binds pheophytin, quinone, additional chlorophylls, carotenoids and lipids. There is also a Cl(-1) ion associated with D1 and D2, which is required for oxygen evolution. The PSII complex binds additional chlorophylls, carotenoids and specific lipids. serves as cofactor.

The protein resides in the plastid. The protein localises to the chloroplast thylakoid membrane. The catalysed reaction is 2 a plastoquinone + 4 hnu + 2 H2O = 2 a plastoquinol + O2. Photosystem II (PSII) is a light-driven water:plastoquinone oxidoreductase that uses light energy to abstract electrons from H(2)O, generating O(2) and a proton gradient subsequently used for ATP formation. It consists of a core antenna complex that captures photons, and an electron transfer chain that converts photonic excitation into a charge separation. The D1/D2 (PsbA/PsbD) reaction center heterodimer binds P680, the primary electron donor of PSII as well as several subsequent electron acceptors. D2 is needed for assembly of a stable PSII complex. This is Photosystem II D2 protein from Ceratophyllum demersum (Rigid hornwort).